Here is a 689-residue protein sequence, read N- to C-terminus: DNA ligase (689 aa).

NAD(+)-binding positions include 40-44 (DSEYD), 89-90 (SL), and Glu121. Lys123 acts as the N6-AMP-lysine intermediate in catalysis. 4 residues coordinate NAD(+): Arg144, Glu179, Lys295, and Lys319. The Zn(2+) site is built by Cys413, Cys416, Cys431, and Cys437. The BRCT domain maps to 610-689 (REQSSLTDKI…EEWLTLIKNV (80 aa)).

This sequence belongs to the NAD-dependent DNA ligase family. LigA subfamily. Mg(2+) is required as a cofactor. Mn(2+) serves as cofactor.

The catalysed reaction is NAD(+) + (deoxyribonucleotide)n-3'-hydroxyl + 5'-phospho-(deoxyribonucleotide)m = (deoxyribonucleotide)n+m + AMP + beta-nicotinamide D-nucleotide.. Functionally, DNA ligase that catalyzes the formation of phosphodiester linkages between 5'-phosphoryl and 3'-hydroxyl groups in double-stranded DNA using NAD as a coenzyme and as the energy source for the reaction. It is essential for DNA replication and repair of damaged DNA. The protein is DNA ligase of Rickettsia rickettsii (strain Iowa).